Reading from the N-terminus, the 318-residue chain is NAD(P)H-dependent D-xylose reductase (318 aa).

Residue Tyr48 is the Proton donor of the active site. His110 serves as a coordination point for substrate. Residues Ser165–Asn166, Ser214–Glu223, and Lys270–Asn280 each bind NAD(+).

Belongs to the aldo/keto reductase family.

It carries out the reaction xylitol + NAD(+) = D-xylose + NADH + H(+). The enzyme catalyses xylitol + NADP(+) = D-xylose + NADPH + H(+). The protein operates within carbohydrate metabolism; D-xylose degradation. Its activity is regulated as follows. NADP(+) is a potent inhibitor of both the NADPH- and NADH-linked xylose reduction, whereas NAD(+) showS strong inhibition only with the NADH-linked reaction. Functionally, reduces D-xylose into xylitol. Has a preference for NADPH, but can also utilize NADH as cosubstrate. The chain is NAD(P)H-dependent D-xylose reductase (XYL1) from Scheffersomyces stipitis (strain ATCC 58785 / CBS 6054 / NBRC 10063 / NRRL Y-11545) (Yeast).